The chain runs to 1686 residues: Thrombospondin type-1 domain-containing protein 7A (1686 aa).

An N-terminal signal peptide occupies residues 1-36 (MGLASRAPGKGGTSAGALASLFRVALLFFGLWDVQT). At 37-1635 (QTVANTRPTY…FGPDGKLKTW (1599 aa)) the chain is on the extracellular side. 3 consecutive TSP type-1 domains span residues 44–103 (PTYI…RVCD), 107–181 (ELYD…IPCP), and 183–236 (DCVV…GKCE). The N-linked (GlcNAc...) asparagine glycan is linked to N223. The disordered stretch occupies residues 257–321 (IRQARDTGEA…EKKRMRDPET (65 aa)). Composition is skewed to basic and acidic residues over residues 259-272 (QARD…PKAE) and 294-321 (EKKE…DPET). TSP type-1 domains are found at residues 385-441 (DCEV…SPQG), 448-535 (VVYN…IPCP), 537-596 (ECEV…PSCY), 656-717 (DCVL…HPCT), 718-797 (VYHW…LPCK), 799-859 (DCVV…SVCP), 860-932 (GYRW…LPCQ), 934-985 (DCQL…QYCP), 988-1061 (KYNA…IPCP), 1063-1123 (DCKL…SDCS), 1124-1191 (QYVW…LPCP), 1193-1247 (DCVL…SNCF), 1248-1311 (HYSY…VECP), 1313-1368 (NCQL…KPCF), 1369-1439 (SWRY…VPCP), and 1441-1502 (ECYL…GQCY). 3 disulfides stabilise this stretch: C460–C530, C480–C534, and C491–C519. N-linked (GlcNAc...) asparagine glycosylation is present at N475. A glycan (N-linked (GlcNAc...) asparagine) is linked at N525. 2 disulfides stabilise this stretch: C657-C699 and C668-C672. Residue N701 is glycosylated (N-linked (GlcNAc...) asparagine). 7 cysteine pairs are disulfide-bonded: C711-C716, C729-C792, C756-C796, C767-C780, C800-C842, C811-C815, and C852-C858. N739 carries an N-linked (GlcNAc...) asparagine glycan. N996 carries an N-linked (GlcNAc...) asparagine glycan. Cystine bridges form between C1000–C1056, C1022–C1060, C1033–C1046, C1064–C1101, C1075–C1079, and C1118–C1122. Residue N1071 is glycosylated (N-linked (GlcNAc...) asparagine). N-linked (GlcNAc...) asparagine glycosylation is present at N1212. An intrachain disulfide couples C1240 to C1246. A glycan (N-linked (GlcNAc...) asparagine) is linked at N1252. 12 disulfide bridges follow: C1259–C1306, C1267–C1310, C1278–C1291, C1314–C1352, C1325–C1329, C1362–C1367, C1378–C1434, C1385–C1438, C1396–C1415, C1442–C1486, C1453–C1457, and C1496–C1501. Residue N1303 is glycosylated (N-linked (GlcNAc...) asparagine). N1393 carries N-linked (GlcNAc...) asparagine glycosylation. N1527 carries N-linked (GlcNAc...) asparagine glycosylation. A helical membrane pass occupies residues 1636 to 1656 (VYGVAAGAFVLLVFIVSMTYL). At 1657–1686 (ACKKPKKPQRRQMNNRLKPLTLAYDGDADM) the chain is on the cytoplasmic side.

Post-translationally, extensively N-glycosylated.

Its subcellular location is the cell membrane. It is found in the cell projection. Required for normal sprouting angiogenesis and normal embryonic development of intersegmental vessels (ISV). Required for normal function of the glomerular filtration barrier. Required for normal axon outgrowth on embryonic motor neurons at the level of the horizontal myoseptum. Required for normal expression of notch1b, suggesting that its functions in angiogenesis and neuron outgrowth are due to decreased expression of notch1b. Plays a role in actin cytoskeleton rearrangement. This chain is Thrombospondin type-1 domain-containing protein 7A, found in Danio rerio (Zebrafish).